The sequence spans 332 residues: Fructose-1,6-bisphosphatase class 1 (332 aa).

Residues Glu-89, Asp-110, Leu-112, and Asp-113 each coordinate Mg(2+). Substrate contacts are provided by residues 113–116, Asn-206, Tyr-239, 257–259, and Lys-269; these read DGSS and YLY. Glu-275 is a Mg(2+) binding site.

It belongs to the FBPase class 1 family. In terms of assembly, homotetramer. The cofactor is Mg(2+).

It is found in the cytoplasm. The catalysed reaction is beta-D-fructose 1,6-bisphosphate + H2O = beta-D-fructose 6-phosphate + phosphate. It participates in carbohydrate biosynthesis; gluconeogenesis. This Escherichia coli O157:H7 protein is Fructose-1,6-bisphosphatase class 1.